Consider the following 672-residue polypeptide: DNA ligase (672 aa).

NAD(+) contacts are provided by residues aspartate 32–aspartate 36, serine 81–leucine 82, and glutamate 113. Residue lysine 115 is the N6-AMP-lysine intermediate of the active site. 4 residues coordinate NAD(+): arginine 136, glutamate 173, lysine 290, and lysine 314. Positions 408, 411, 426, and 432 each coordinate Zn(2+). The BRCT domain maps to glutamate 592–serine 672.

The protein belongs to the NAD-dependent DNA ligase family. LigA subfamily. Mg(2+) is required as a cofactor. Mn(2+) serves as cofactor.

It catalyses the reaction NAD(+) + (deoxyribonucleotide)n-3'-hydroxyl + 5'-phospho-(deoxyribonucleotide)m = (deoxyribonucleotide)n+m + AMP + beta-nicotinamide D-nucleotide.. Functionally, DNA ligase that catalyzes the formation of phosphodiester linkages between 5'-phosphoryl and 3'-hydroxyl groups in double-stranded DNA using NAD as a coenzyme and as the energy source for the reaction. It is essential for DNA replication and repair of damaged DNA. In Yersinia enterocolitica serotype O:8 / biotype 1B (strain NCTC 13174 / 8081), this protein is DNA ligase.